Here is an 86-residue protein sequence, read N- to C-terminus: UPF0125 protein bbp_234 (86 aa).

Belongs to the UPF0125 (RnfH) family.

This is UPF0125 protein bbp_234 from Buchnera aphidicola subsp. Baizongia pistaciae (strain Bp).